Consider the following 187-residue polypeptide: GTP cyclohydrolase 1 (187 aa).

Zn(2+)-binding residues include cysteine 78, histidine 81, and cysteine 149.

This sequence belongs to the GTP cyclohydrolase I family. As to quaternary structure, toroid-shaped homodecamer, composed of two pentamers of five dimers.

The enzyme catalyses GTP + H2O = 7,8-dihydroneopterin 3'-triphosphate + formate + H(+). It participates in cofactor biosynthesis; 7,8-dihydroneopterin triphosphate biosynthesis; 7,8-dihydroneopterin triphosphate from GTP: step 1/1. In Wolinella succinogenes (strain ATCC 29543 / DSM 1740 / CCUG 13145 / JCM 31913 / LMG 7466 / NCTC 11488 / FDC 602W) (Vibrio succinogenes), this protein is GTP cyclohydrolase 1.